Reading from the N-terminus, the 278-residue chain is Insulin-like growth factor-binding protein-like 1 (278 aa).

The first 25 residues, 1–25 (MPRLSLLLPLLLLLLLPLLPPLSPS), serve as a signal peptide directing secretion. The IGFBP N-terminal domain maps to 34–109 (RRPKCGPCRP…PEGTGLCVCA (76 aa)). Intrachain disulfides connect C38–C63, C41–C65, C46–C66, C52–C69, C77–C91, C85–C106, and C115–C151. Residues 95-153 (AAGAAPEGTGLCVCAQRGTVCGSDGRSYPSVCALRLRARHTPRAHPGHLHKARDGPCEF) enclose the Kazal-like domain. Residues 155-259 (PVVVVPPRSV…GEAESHSTVT (105 aa)) enclose the Ig-like C2-type domain. N166 is a glycosylation site (N-linked (GlcNAc...) asparagine). An intrachain disulfide couples C176 to C243.

In terms of tissue distribution, expressed at the highest level in both brain and testis, with lower levels in the prostate, bladder and lung.

It localises to the secreted. IGF-binding proteins prolong the half-life of IGFs and have been shown to either inhibit or stimulate the growth promoting effects of the IGFs in cell culture. They alter the interaction of IGFs with their cell surface receptors. May be a putative tumor suppressor protein. This Homo sapiens (Human) protein is Insulin-like growth factor-binding protein-like 1 (IGFBPL1).